We begin with the raw amino-acid sequence, 191 residues long: Fe/S biogenesis protein NfuA (191 aa).

The [4Fe-4S] cluster site is built by Cys149 and Cys152.

The protein belongs to the NfuA family. Homodimer. [4Fe-4S] cluster is required as a cofactor.

Functionally, involved in iron-sulfur cluster biogenesis. Binds a 4Fe-4S cluster, can transfer this cluster to apoproteins, and thereby intervenes in the maturation of Fe/S proteins. Could also act as a scaffold/chaperone for damaged Fe/S proteins. This Photorhabdus laumondii subsp. laumondii (strain DSM 15139 / CIP 105565 / TT01) (Photorhabdus luminescens subsp. laumondii) protein is Fe/S biogenesis protein NfuA.